A 471-amino-acid polypeptide reads, in one-letter code: Probable nucleoredoxin 3 (471 aa).

2 consecutive Thioredoxin domains span residues 15 to 173 and 179 to 334; these read VSIP…ARRQ and QLLG…KERD.

The protein belongs to the nucleoredoxin family.

It carries out the reaction [protein]-dithiol + NAD(+) = [protein]-disulfide + NADH + H(+). The catalysed reaction is [protein]-dithiol + NADP(+) = [protein]-disulfide + NADPH + H(+). Functionally, probable thiol-disulfide oxidoreductase that may participate in various redox reactions. The protein is Probable nucleoredoxin 3 of Oryza sativa subsp. japonica (Rice).